The primary structure comprises 199 residues: Mediator of RNA polymerase II transcription subunit 10 (199 aa).

It belongs to the Mediator complex subunit 10 family. Component of the Mediator complex.

It is found in the nucleus. Functionally, component of the Mediator complex, a coactivator involved in the regulated transcription of nearly all RNA polymerase II-dependent genes. Mediator functions as a bridge to convey information from gene-specific regulatory proteins to the basal RNA polymerase II transcription machinery. Mediator is recruited to promoters by direct interactions with regulatory proteins and serves as a scaffold for the assembly of a functional preinitiation complex with RNA polymerase II and the general transcription factors. The chain is Mediator of RNA polymerase II transcription subunit 10 (NUT2) from Candida glabrata (strain ATCC 2001 / BCRC 20586 / JCM 3761 / NBRC 0622 / NRRL Y-65 / CBS 138) (Yeast).